A 62-amino-acid polypeptide reads, in one-letter code: Large ribosomal subunit protein uL30 (62 aa).

The protein belongs to the universal ribosomal protein uL30 family. As to quaternary structure, part of the 50S ribosomal subunit.

The polypeptide is Large ribosomal subunit protein uL30 (Staphylococcus carnosus (strain TM300)).